The chain runs to 188 residues: Methylamine dehydrogenase light chain (188 aa).

A signal peptide (tat-type signal) is located at residues 1–57 (MLGNFRFDDMVEKLSRRVAGQTSRRSVIGKLGTAMLGIGLVPLLPVDRRGRVSRANA). Intrachain disulfides connect cysteine 80–cysteine 145, cysteine 86–cysteine 118, cysteine 93–cysteine 178, cysteine 95–cysteine 143, cysteine 103–cysteine 134, and cysteine 135–cysteine 166. Tryptophan 114 carries the post-translational modification Tryptophylquinone. Residues 114 to 165 (WVASCYNPTDGQSYLIAYRDCCGYNVSGRCPCLNTEGELPVYRPEFANDIIW) constitute a cross-link (tryptophan tryptophylquinone (Trp-Trp)).

It belongs to the aromatic amine dehydrogenase light chain family. Heterotetramer of two light and two heavy chains. Tryptophan tryptophylquinone residue serves as cofactor. Predicted to be exported by the Tat system. The position of the signal peptide cleavage has not been experimentally proven. Post-translationally, tryptophan tryptophylquinone (TTQ) is formed by oxidation of the indole ring of a tryptophan to form tryptophylquinone followed by covalent cross-linking with another tryptophan residue.

Its subcellular location is the periplasm. The enzyme catalyses 2 oxidized [amicyanin] + methylamine + H2O = 2 reduced [amicyanin] + formaldehyde + NH4(+) + 2 H(+). It participates in one-carbon metabolism; methylamine degradation; formaldehyde from methylamine: step 1/1. Methylamine dehydrogenase carries out the oxidation of methylamine. Electrons are passed from methylamine dehydrogenase to amicyanin. The sequence is that of Methylamine dehydrogenase light chain (mauA) from Paracoccus denitrificans.